We begin with the raw amino-acid sequence, 236 residues long: uncharacterized protein (236 aa).

Residues 1–73 (MEPGGSENAA…GGGWGWGNTQ (73 aa)) are disordered.

This is an uncharacterized protein from Homo sapiens (Human).